The sequence spans 363 residues: MASVSFEQVTKQFDDYVAVNNLNLEIEDGEFLVFVGPSGCGKTTSLRLLAGLETVSQGQICIGDRRVNELSPKDRDIAMVFQSYALYPHMSVYENMAFSLDLQGKPKEEIRQRVCSAAELLGIEKLLHRKPKELSGGQRQRVAVGRAIVRKPSVFLMDEPLSNLDAMLRVQARKEISKLHSDLATTFIYVTHDQVEAMTMGDRIAVMKDGILQQVDSPANLYNQPANLFVAGFIGSPAMNFFQVERLSQEGKEKLSLDGVVLPMPDSVAKNGDRPLTLGIRPENIYHPQYLPLEIEPMELPATVNLVEMMGNELIVYAQTPAGTEFVARIDPRVNIKQKDSVKFVVDTQRFYYFDREMETAIF.

In terms of domain architecture, ABC transporter spans 4–234 (VSFEQVTKQF…PANLFVAGFI (231 aa)). Residue 36 to 43 (GPSGCGKT) participates in ATP binding.

This sequence belongs to the ABC transporter superfamily. The complex is composed of two ATP-binding proteins (GgtA), two transmembrane proteins (GgtC and GgtD) and a solute-binding protein (GgtB).

Its subcellular location is the cell membrane. Its function is as follows. Part of the ABC transporter complex GgtABCD involved in the uptake of the osmoprotective compounds glucosylglycerol (GG), sucrose and trehalose. Responsible for energy coupling to the transport system. The protein is Osmoprotective compounds uptake ATP-binding protein GgtA of Synechocystis sp. (strain ATCC 27184 / PCC 6803 / Kazusa).